Consider the following 86-residue polypeptide: Precursor of CEP4 (86 aa).

An N-terminal signal peptide occupies residues Met1–Ala30. Residues Ala31 to Asp64 constitute a propeptide that is removed on maturation. Positions Gln63–Pro86 are disordered. Pro68 and Pro73 each carry hydroxyproline. A propeptide spanning residues Lys80–Pro86 is cleaved from the precursor.

This sequence belongs to the C-terminally encoded plant signaling peptide (CEP) family. In terms of assembly, interacts with CEP receptors (e.g. CEPR1 and CEPR2). In terms of processing, the mature small signaling peptide is generated by proteolytic processing of the longer precursor. As to expression, expressed at low levels in flowers. Present in lateral roots, shoot apical meristem (SAM), flowers and siliques.

Its subcellular location is the secreted. It localises to the extracellular space. The protein resides in the apoplast. Its function is as follows. Extracellular signaling peptide that represses primary root growth rate. Promotes shoot growth and modulates leaf morphology. Regulates systemic nitrogen (N)-demand signaling. Mediates up-regulation of genes involved in N uptake and assimilation pathways. This Arabidopsis thaliana (Mouse-ear cress) protein is Precursor of CEP4.